We begin with the raw amino-acid sequence, 288 residues long: Bifunctional protein FolD (288 aa).

NADP(+)-binding positions include 166–168 (GAS) and Ile232.

Belongs to the tetrahydrofolate dehydrogenase/cyclohydrolase family. In terms of assembly, homodimer.

The enzyme catalyses (6R)-5,10-methylene-5,6,7,8-tetrahydrofolate + NADP(+) = (6R)-5,10-methenyltetrahydrofolate + NADPH. The catalysed reaction is (6R)-5,10-methenyltetrahydrofolate + H2O = (6R)-10-formyltetrahydrofolate + H(+). Its pathway is one-carbon metabolism; tetrahydrofolate interconversion. In terms of biological role, catalyzes the oxidation of 5,10-methylenetetrahydrofolate to 5,10-methenyltetrahydrofolate and then the hydrolysis of 5,10-methenyltetrahydrofolate to 10-formyltetrahydrofolate. The sequence is that of Bifunctional protein FolD from Yersinia pseudotuberculosis serotype O:1b (strain IP 31758).